A 305-amino-acid polypeptide reads, in one-letter code: UDP-3-O-acyl-N-acetylglucosamine deacetylase (305 aa).

Residues histidine 78, histidine 237, and aspartate 241 each contribute to the Zn(2+) site. The active-site Proton donor is histidine 264.

Belongs to the LpxC family. The cofactor is Zn(2+).

The catalysed reaction is a UDP-3-O-[(3R)-3-hydroxyacyl]-N-acetyl-alpha-D-glucosamine + H2O = a UDP-3-O-[(3R)-3-hydroxyacyl]-alpha-D-glucosamine + acetate. It functions in the pathway glycolipid biosynthesis; lipid IV(A) biosynthesis; lipid IV(A) from (3R)-3-hydroxytetradecanoyl-[acyl-carrier-protein] and UDP-N-acetyl-alpha-D-glucosamine: step 2/6. In terms of biological role, catalyzes the hydrolysis of UDP-3-O-myristoyl-N-acetylglucosamine to form UDP-3-O-myristoylglucosamine and acetate, the committed step in lipid A biosynthesis. The protein is UDP-3-O-acyl-N-acetylglucosamine deacetylase of Burkholderia ambifaria (strain ATCC BAA-244 / DSM 16087 / CCUG 44356 / LMG 19182 / AMMD) (Burkholderia cepacia (strain AMMD)).